A 111-amino-acid chain; its full sequence is MSDTLNQLAEVLEARKNATPDSSYVASLYHKGLNKILEKVGEESVETILAAKDAAASGDCSELIHETADLWFHSLVMLAALGQHPQAVLDELDRRFGLSGHAEKAARQPSA.

Belongs to the PRA-PH family.

The protein resides in the cytoplasm. The enzyme catalyses 1-(5-phospho-beta-D-ribosyl)-ATP + H2O = 1-(5-phospho-beta-D-ribosyl)-5'-AMP + diphosphate + H(+). The protein operates within amino-acid biosynthesis; L-histidine biosynthesis; L-histidine from 5-phospho-alpha-D-ribose 1-diphosphate: step 2/9. The protein is Phosphoribosyl-ATP pyrophosphatase of Azotobacter vinelandii (strain DJ / ATCC BAA-1303).